A 431-amino-acid polypeptide reads, in one-letter code: Serine--tRNA ligase (431 aa).

Residue 237–239 (TAE) coordinates L-serine. 268 to 270 (RSE) contributes to the ATP binding site. Glu291 serves as a coordination point for L-serine. 355–358 (EISS) contributes to the ATP binding site. Ser390 serves as a coordination point for L-serine.

Belongs to the class-II aminoacyl-tRNA synthetase family. Type-1 seryl-tRNA synthetase subfamily. Homodimer. The tRNA molecule binds across the dimer.

The protein resides in the cytoplasm. The enzyme catalyses tRNA(Ser) + L-serine + ATP = L-seryl-tRNA(Ser) + AMP + diphosphate + H(+). The catalysed reaction is tRNA(Sec) + L-serine + ATP = L-seryl-tRNA(Sec) + AMP + diphosphate + H(+). It functions in the pathway aminoacyl-tRNA biosynthesis; selenocysteinyl-tRNA(Sec) biosynthesis; L-seryl-tRNA(Sec) from L-serine and tRNA(Sec): step 1/1. Catalyzes the attachment of serine to tRNA(Ser). Is also able to aminoacylate tRNA(Sec) with serine, to form the misacylated tRNA L-seryl-tRNA(Sec), which will be further converted into selenocysteinyl-tRNA(Sec). The chain is Serine--tRNA ligase from Neisseria meningitidis serogroup B (strain ATCC BAA-335 / MC58).